The chain runs to 414 residues: Esterase FrsA (414 aa).

Belongs to the FrsA family.

It carries out the reaction a carboxylic ester + H2O = an alcohol + a carboxylate + H(+). Its function is as follows. Catalyzes the hydrolysis of esters. This is Esterase FrsA from Enterobacter sp. (strain 638).